The following is a 160-amino-acid chain: Large ribosomal subunit protein uL22c (160 aa).

It belongs to the universal ribosomal protein uL22 family. Part of the 50S ribosomal subunit.

Its subcellular location is the plastid. It is found in the chloroplast. This protein binds specifically to 23S rRNA. In terms of biological role, the globular domain of the protein is located near the polypeptide exit tunnel on the outside of the subunit, while an extended beta-hairpin is found that lines the wall of the exit tunnel in the center of the 70S ribosome. The protein is Large ribosomal subunit protein uL22c (rpl22) of Capsella bursa-pastoris (Shepherd's purse).